A 311-amino-acid polypeptide reads, in one-letter code: Geranylgeranyl transferase type-2 subunit alpha (311 aa).

A coiled-coil region spans residues 12-43 (EKAKAQRLKELEKIESYNKLVKSFEELREKQN). PFTA repeat units follow at residues 49 to 82 (ISLS…TETK), 93 to 126 (NEMK…DNCD), 129 to 162 (REMK…NIKL), 164 to 197 (DELK…YKEP), and 206 to 239 (EEFE…KSIP).

The protein belongs to the protein prenyltransferase subunit alpha family. Heterodimer of an alpha and a beta subunit.

It catalyses the reaction geranylgeranyl diphosphate + L-cysteinyl-[protein] = S-geranylgeranyl-L-cysteinyl-[protein] + diphosphate. In terms of biological role, catalyzes the transfer of a geranylgeranyl moiety from geranylgeranyl diphosphate to proteins with a C-terminal sequence motif -XCC or -XCXC, where both cysteines may become modified. The protein is Geranylgeranyl transferase type-2 subunit alpha (rabggta) of Dictyostelium discoideum (Social amoeba).